We begin with the raw amino-acid sequence, 950 residues long: 5'-3' exoribonuclease 2 (950 aa).

Residues 262-278 (PCGLCNQFGHEVKDCEG) form a CCHC-type zinc finger. K286 carries the N6-acetyllysine modification. Residues 408–508 (KDDEDSFRRR…SDSEPEPEDN (101 aa)) form a disordered region. The segment covering 416–426 (RRQKEKRKRMK) has biased composition (basic residues). Phosphothreonine is present on T439. The span at 445 to 458 (SRNSPGSQVASNPR) shows a compositional bias: polar residues. S448, S471, S473, S475, S482, S487, S499, S501, and S678 each carry phosphoserine. Positions 468–482 (NNSSPSISPNTSFTS) are enriched in low complexity. Asymmetric dimethylarginine; alternate occurs at positions 824, 847, and 851. Residues R824, R847, and R851 each carry the omega-N-methylarginine; alternate modification. R880 is subject to Asymmetric dimethylarginine. An Asymmetric dimethylarginine; alternate modification is found at R883. R883 is subject to Omega-N-methylarginine; alternate. R895 carries the omega-N-methylarginine modification. A disordered region spans residues 911-950 (MLAGPGGYPPRRDDRGGRQGYPREGRKYPLPPPSGRYNWN). Over residues 920 to 937 (PRRDDRGGRQGYPREGRK) the composition is skewed to basic and acidic residues. R946 bears the Asymmetric dimethylarginine; alternate mark. The residue at position 946 (R946) is an Omega-N-methylarginine; alternate.

The protein belongs to the 5'-3' exonuclease family. XRN2/RAT1 subfamily. In terms of assembly, interacts with POLR2A and SMN1/SMN2. Interacts with CDKN2AIP and NKRF. Interacts with CDKN2AIPNL; the interaction is direct. Interacts with TRIM71 (via NHL repeats) in an RNA-dependent manner. Interacts with DHX34; the interaction is RNA-independent. Expressed in the spleen, thymus, prostate, testis, ovary, small intestine, colon, peripheral blood leukocytes, heart, brain, placenta, lung, liver, skeletal muscle, kidney, and pancreas. Isoform 2 is expressed predominantly in peripheral blood leukocytes.

It is found in the nucleus. Its subcellular location is the nucleolus. Possesses 5'-&gt;3' exoribonuclease activity. May promote the termination of transcription by RNA polymerase II. During transcription termination, cleavage at the polyadenylation site liberates a 5' fragment which is subsequently processed to form the mature mRNA and a 3' fragment which remains attached to the elongating polymerase. The processive degradation of this 3' fragment by this protein may promote termination of transcription. Binds to RNA polymerase II (RNAp II) transcription termination R-loops formed by G-rich pause sites. The chain is 5'-3' exoribonuclease 2 (XRN2) from Homo sapiens (Human).